A 477-amino-acid polypeptide reads, in one-letter code: Methylenetetrahydrofolate--tRNA-(uracil-5-)-methyltransferase TrmFO (477 aa).

Position 14-19 (14-19 (GGGLAG)) interacts with FAD.

Belongs to the MnmG family. TrmFO subfamily. FAD serves as cofactor.

Its subcellular location is the cytoplasm. The catalysed reaction is uridine(54) in tRNA + (6R)-5,10-methylene-5,6,7,8-tetrahydrofolate + NADH + H(+) = 5-methyluridine(54) in tRNA + (6S)-5,6,7,8-tetrahydrofolate + NAD(+). The enzyme catalyses uridine(54) in tRNA + (6R)-5,10-methylene-5,6,7,8-tetrahydrofolate + NADPH + H(+) = 5-methyluridine(54) in tRNA + (6S)-5,6,7,8-tetrahydrofolate + NADP(+). Catalyzes the folate-dependent formation of 5-methyl-uridine at position 54 (M-5-U54) in all tRNAs. This chain is Methylenetetrahydrofolate--tRNA-(uracil-5-)-methyltransferase TrmFO, found in Rhizobium johnstonii (strain DSM 114642 / LMG 32736 / 3841) (Rhizobium leguminosarum bv. viciae).